The primary structure comprises 99 residues: NADH-quinone oxidoreductase subunit K (99 aa).

3 consecutive transmembrane segments (helical) span residues 2 to 22 (PVEYYLWLASILFGIGLLGVL), 28 to 48 (LILMMSVELMLNAANLTFLAF), and 60 to 80 (IAFFVIAVAAAEAAVGLAVVI).

Belongs to the complex I subunit 4L family. NDH-1 is composed of 14 different subunits. Subunits NuoA, H, J, K, L, M, N constitute the membrane sector of the complex.

The protein resides in the cell inner membrane. The catalysed reaction is a quinone + NADH + 5 H(+)(in) = a quinol + NAD(+) + 4 H(+)(out). In terms of biological role, NDH-1 shuttles electrons from NADH, via FMN and iron-sulfur (Fe-S) centers, to quinones in the respiratory chain. The immediate electron acceptor for the enzyme in this species is believed to be ubiquinone. Couples the redox reaction to proton translocation (for every two electrons transferred, four hydrogen ions are translocated across the cytoplasmic membrane), and thus conserves the redox energy in a proton gradient. This Anaeromyxobacter dehalogenans (strain 2CP-C) protein is NADH-quinone oxidoreductase subunit K.